Reading from the N-terminus, the 796-residue chain is Nuclear cap-binding protein subunit 1 (796 aa).

The interval 1 to 26 (MSRRRHSDGDDGGQSHKRRRTSEPVE) is disordered. The 213-residue stretch at 28-240 (EDRLESLICR…CLYAQIQKLK (213 aa)) folds into the MIF4G domain. Residues 641–719 (LHSTIRKMNK…SEQKNLFLVI (79 aa)) are a coiled coil. Positions 664 to 695 (DKLERQQHKKQKDSGDEEDMEKNSEDEDGQLE) are disordered. Residues 678–695 (GDEEDMEKNSEDEDGQLE) are compositionally biased toward acidic residues.

Belongs to the NCBP1 family. Component of the nuclear cap-binding complex (CBC), a heterodimer composed of ncbp1/cbp80 and ncbp2/cbp20 that interacts with m7GpppG-capped RNA. Component of an alternative nuclear cap-binding complex (CBC) composed of ncbp1/cbp80 and ncbp3.

The protein localises to the nucleus. The protein resides in the cytoplasm. Functionally, component of the cap-binding complex (CBC), which binds cotranscriptionally to the 5'-cap of pre-mRNAs and is involved in various processes such as pre-mRNA splicing, translation regulation, nonsense-mediated mRNA decay, RNA-mediated gene silencing (RNAi) by microRNAs (miRNAs) and mRNA export. The CBC complex is involved in mRNA export from the nucleus, leading to the recruitment of the mRNA export machinery to the 5'-end of mRNA and to mRNA export in a 5' to 3' direction through the nuclear pore. The CBC complex is also involved in mediating U snRNA and intronless mRNAs export from the nucleus. The CBC complex is essential for a pioneer round of mRNA translation, before steady state translation when the CBC complex is replaced by cytoplasmic cap-binding protein eIF4E. The pioneer round of mRNA translation mediated by the CBC complex plays a central role in nonsense-mediated mRNA decay (NMD), NMD only taking place in mRNAs bound to the CBC complex, but not on eIF4E-bound mRNAs. The CBC complex enhances NMD in mRNAs containing at least one exon-junction complex (EJC), promoting the interaction between UPF1 and UPF2. The CBC complex is also involved in 'failsafe' NMD, which is independent of the EJC complex, while it does not participate in Staufen-mediated mRNA decay (SMD). During cell proliferation, the CBC complex is also involved in microRNAs (miRNAs) biogenesis via its interaction with SRRT/ARS2 and is required for miRNA-mediated RNA interference. The CBC complex also acts as a negative regulator of parn, thereby acting as an inhibitor of mRNA deadenylation. In the CBC complex, ncbp1/cbp80 does not bind directly capped RNAs (m7GpppG-capped RNA) but is required to stabilize the movement of the N-terminal loop of ncbp2/cbp20 and lock the CBC into a high affinity cap-binding state with the cap structure. Associates with NCBP3 to form an alternative cap-binding complex (CBC) which plays a key role in mRNA export. The conventional CBC with NCBP2 binds both small nuclear RNA (snRNA) and messenger (mRNA) and is involved in their export from the nucleus whereas the alternative CBC with NCBP3 does not bind snRNA and associates only with mRNA thereby playing a role only in mRNA export. This is Nuclear cap-binding protein subunit 1 (ncbp1) from Salmo salar (Atlantic salmon).